Reading from the N-terminus, the 328-residue chain is Tetraacyldisaccharide 4'-kinase (328 aa).

55 to 62 (TAGGNGKT) contributes to the ATP binding site.

It belongs to the LpxK family.

It carries out the reaction a lipid A disaccharide + ATP = a lipid IVA + ADP + H(+). The protein operates within glycolipid biosynthesis; lipid IV(A) biosynthesis; lipid IV(A) from (3R)-3-hydroxytetradecanoyl-[acyl-carrier-protein] and UDP-N-acetyl-alpha-D-glucosamine: step 6/6. Functionally, transfers the gamma-phosphate of ATP to the 4'-position of a tetraacyldisaccharide 1-phosphate intermediate (termed DS-1-P) to form tetraacyldisaccharide 1,4'-bis-phosphate (lipid IVA). The protein is Tetraacyldisaccharide 4'-kinase of Shigella boydii serotype 4 (strain Sb227).